We begin with the raw amino-acid sequence, 245 residues long: DNA polymerase sliding clamp 1 (245 aa).

It belongs to the PCNA family. Homotrimer. The subunits circularize to form a toroid; DNA passes through its center. Replication factor C (RFC) is required to load the toroid on the DNA.

Functionally, sliding clamp subunit that acts as a moving platform for DNA processing. Responsible for tethering the catalytic subunit of DNA polymerase and other proteins to DNA during high-speed replication. This chain is DNA polymerase sliding clamp 1, found in Sulfurisphaera ohwakuensis.